We begin with the raw amino-acid sequence, 319 residues long: ATP-dependent 6-phosphofructokinase (319 aa).

G11 contacts ATP. 21–25 contacts ADP; it reads RAVVR. ATP contacts are provided by residues 72-73 and 102-105; these read RC and GDGS. D103 lines the Mg(2+) pocket. Residue 125–127 coordinates substrate; the sequence is TID. D127 acts as the Proton acceptor in catalysis. R154 contacts ADP. 169-171 lines the substrate pocket; it reads MGR. Residues 185–187, R211, and 213–215 each bind ADP; these read GAE and KKH. Residues E222, R243, and 249 to 252 each bind substrate; that span reads HIQR.

This sequence belongs to the phosphofructokinase type A (PFKA) family. ATP-dependent PFK group I subfamily. Prokaryotic clade 'B1' sub-subfamily. Homotetramer. Mg(2+) is required as a cofactor.

It localises to the cytoplasm. It catalyses the reaction beta-D-fructose 6-phosphate + ATP = beta-D-fructose 1,6-bisphosphate + ADP + H(+). Its pathway is carbohydrate degradation; glycolysis; D-glyceraldehyde 3-phosphate and glycerone phosphate from D-glucose: step 3/4. Its activity is regulated as follows. Allosterically activated by ADP and other diphosphonucleosides, and allosterically inhibited by phosphoenolpyruvate. Catalyzes the phosphorylation of D-fructose 6-phosphate to fructose 1,6-bisphosphate by ATP, the first committing step of glycolysis. The chain is ATP-dependent 6-phosphofructokinase from Lysinibacillus sphaericus (Bacillus sphaericus).